Here is a 239-residue protein sequence, read N- to C-terminus: Demethylmenaquinone methyltransferase (239 aa).

S-adenosyl-L-methionine contacts are provided by residues Thr68, Asp86, and 111-112; that span reads NG.

Belongs to the class I-like SAM-binding methyltransferase superfamily. MenG/UbiE family.

The catalysed reaction is a 2-demethylmenaquinol + S-adenosyl-L-methionine = a menaquinol + S-adenosyl-L-homocysteine + H(+). It functions in the pathway quinol/quinone metabolism; menaquinone biosynthesis; menaquinol from 1,4-dihydroxy-2-naphthoate: step 2/2. Methyltransferase required for the conversion of demethylmenaquinol (DMKH2) to menaquinol (MKH2). The chain is Demethylmenaquinone methyltransferase from Tropheryma whipplei (strain TW08/27) (Whipple's bacillus).